A 106-amino-acid polypeptide reads, in one-letter code: NADH-quinone oxidoreductase subunit K (106 aa).

3 helical membrane-spanning segments follow: residues 9 to 29 (LGHYLAVAAVLLVLGIFGIFL), 35 to 55 (IVMLMSIELILLAVNLNMVAF), and 70 to 90 (FILTVAAAEAAIGLAILVIYF).

It belongs to the complex I subunit 4L family. As to quaternary structure, NDH-1 is composed of 14 different subunits. Subunits NuoA, H, J, K, L, M, N constitute the membrane sector of the complex.

It is found in the cell inner membrane. The catalysed reaction is a quinone + NADH + 5 H(+)(in) = a quinol + NAD(+) + 4 H(+)(out). NDH-1 shuttles electrons from NADH, via FMN and iron-sulfur (Fe-S) centers, to quinones in the respiratory chain. The immediate electron acceptor for the enzyme in this species is believed to be ubiquinone. Couples the redox reaction to proton translocation (for every two electrons transferred, four hydrogen ions are translocated across the cytoplasmic membrane), and thus conserves the redox energy in a proton gradient. The polypeptide is NADH-quinone oxidoreductase subunit K (Granulibacter bethesdensis (strain ATCC BAA-1260 / CGDNIH1)).